Here is a 98-residue protein sequence, read N- to C-terminus: Complement inhibitor RaCI1 (98 aa).

The first 20 residues, 1 to 20, serve as a signal peptide directing secretion; sequence MNAMLVLFIASALFISEHNT. Cystine bridges form between Cys-33-Cys-57, Cys-38-Cys-59, and Cys-53-Cys-74. A disordered region spans residues 79–98; it reads TTKPPMAPGDNKDNKEEESN. Over residues 88–98 the composition is skewed to basic and acidic residues; that stretch reads DNKDNKEEESN.

Belongs to the RaCI family. Expressed in salivary glands.

The protein resides in the secreted. Its function is as follows. Complement inhibitor. Prevents complement-mediated C5 activation by binding to C5. Binds C5 at a different binding site than the other tick complement inhibitors OmCI and CirpT1, and the drug eculizumab. Inhibits the complement in human and guinea pig but not in other species tested (rabbit, rat, mouse, and pig). The polypeptide is Complement inhibitor RaCI1 (Rhipicephalus appendiculatus (Brown ear tick)).